Consider the following 410-residue polypeptide: Serine hydroxymethyltransferase (410 aa).

(6S)-5,6,7,8-tetrahydrofolate contacts are provided by residues leucine 119 and 123–125 (GHL). Lysine 228 is modified (N6-(pyridoxal phosphate)lysine). Residue 351-353 (SPF) coordinates (6S)-5,6,7,8-tetrahydrofolate.

Belongs to the SHMT family. Homodimer. Requires pyridoxal 5'-phosphate as cofactor.

Its subcellular location is the cytoplasm. It carries out the reaction (6R)-5,10-methylene-5,6,7,8-tetrahydrofolate + glycine + H2O = (6S)-5,6,7,8-tetrahydrofolate + L-serine. It participates in one-carbon metabolism; tetrahydrofolate interconversion. Its pathway is amino-acid biosynthesis; glycine biosynthesis; glycine from L-serine: step 1/1. Its function is as follows. Catalyzes the reversible interconversion of serine and glycine with tetrahydrofolate (THF) serving as the one-carbon carrier. This reaction serves as the major source of one-carbon groups required for the biosynthesis of purines, thymidylate, methionine, and other important biomolecules. Also exhibits THF-independent aldolase activity toward beta-hydroxyamino acids, producing glycine and aldehydes, via a retro-aldol mechanism. This chain is Serine hydroxymethyltransferase, found in Alkaliphilus metalliredigens (strain QYMF).